The chain runs to 325 residues: Reticulocalbin-1 (325 aa).

A signal peptide spans 1 to 23; sequence MARGGRLGLALGLLLALVLALRA. Asn-47 carries N-linked (GlcNAc...) asparagine; partial glycosylation. Ser-49 and Ser-74 each carry phosphoserine. EF-hand domains lie at 73–108, 109–144, 160–195, 197–232, 238–273, and 274–309; these read ESKERLGKIVDRIDSDGDGLVTTEELKLWIKRVQKR, YIYDNVAKVWKDYDRDKDEKISWEEYKQATYGYYLG, KMLPRDERRFKASDLDGDLTATREEFTAFLHPEEFE, MKEIVVLETLEDIDKNGDGFVDQDEYIADMFSHEDN, WVLSEREQFNDFRDLNKDGKLDKDEIRHWILPQDYD, and HAQAEARHLVYESDKNKDEMLTKEEILDNWNMFVGS. Ca(2+) is bound by residues Asp-86, Asp-88, Asp-90, Glu-97, Asp-122, Asp-124, Asp-126, Lys-128, Glu-133, Asp-173, Asp-175, Asp-177, Thr-179, Glu-184, Asp-210, Asn-212, Asp-214, Glu-221, Asp-251, Asn-253, Asp-255, Lys-257, Glu-262, Asp-287, Asn-289, Asp-291, Met-293, and Glu-298. The Prevents secretion from ER motif lies at 322-325; sequence HDEL.

This sequence belongs to the CREC family. In terms of processing, O-glycosylated. O-mannosylated by POMT1 and POMT2 and elongated by POMGNT1.

The protein resides in the endoplasmic reticulum lumen. Its function is as follows. May regulate calcium-dependent activities in the endoplasmic reticulum lumen or post-ER compartment. The protein is Reticulocalbin-1 (Rcn1) of Mus musculus (Mouse).